A 399-amino-acid chain; its full sequence is Aspartate aminotransferase (399 aa).

Residues glycine 42 and asparagine 179 each coordinate L-aspartate. Lysine 240 bears the N6-(pyridoxal phosphate)lysine mark. Arginine 372 contacts L-aspartate.

Belongs to the class-I pyridoxal-phosphate-dependent aminotransferase family. As to quaternary structure, homodimer. Pyridoxal 5'-phosphate serves as cofactor.

It localises to the cytoplasm. It carries out the reaction L-aspartate + 2-oxoglutarate = oxaloacetate + L-glutamate. In Sulfurisphaera tokodaii (strain DSM 16993 / JCM 10545 / NBRC 100140 / 7) (Sulfolobus tokodaii), this protein is Aspartate aminotransferase (aspC).